A 448-amino-acid chain; its full sequence is N-succinylarginine dihydrolase (448 aa).

Residues 20–29 (AGLLFGNEAS), Asn-111, and 138–139 (HR) contribute to the substrate site. The active site involves Glu-175. Residue Arg-213 participates in substrate binding. His-249 is a catalytic residue. Residues Asp-251 and Asn-360 each coordinate substrate. Residue Cys-366 is the Nucleophile of the active site.

It belongs to the succinylarginine dihydrolase family. In terms of assembly, homodimer.

It carries out the reaction N(2)-succinyl-L-arginine + 2 H2O + 2 H(+) = N(2)-succinyl-L-ornithine + 2 NH4(+) + CO2. It functions in the pathway amino-acid degradation; L-arginine degradation via AST pathway; L-glutamate and succinate from L-arginine: step 2/5. Catalyzes the hydrolysis of N(2)-succinylarginine into N(2)-succinylornithine, ammonia and CO(2). This chain is N-succinylarginine dihydrolase, found in Shigella dysenteriae serotype 1 (strain Sd197).